Reading from the N-terminus, the 361-residue chain is G-protein coupled receptor 183 (361 aa).

Residues 1–31 are Extracellular-facing; the sequence is MDIQMANNFTPPSATPQGNDCDLYAHHSTAR. The chain crosses the membrane as a helical span at residues 32-57; that stretch reads IVMPLHYSLVFIIGLVGNLLALVVIV. Residues 58-77 are Cytoplasmic-facing; sequence QNRKKINSTTLYSTNLVISD. A helical membrane pass occupies residues 78–95; it reads ILFTTALPTRIAYYAMGF. Arg87 contacts 7alpha,25-dihydroxycholesterol. Residues 96–105 lie on the Extracellular side of the membrane; that stretch reads DWRIGDALCR. A disulfide bridge links Cys104 with Cys181. A helical transmembrane segment spans residues 106-127; the sequence is ITALVFYINTYAGVNFMTCLSI. 7alpha,25-dihydroxycholesterol contacts are provided by Tyr112 and Tyr116. An interaction with G proteins region spans residues 126–134; it reads SIDRFIAVV. Residues 128-149 are Cytoplasmic-facing; sequence DRFIAVVHPLRYNKIKRIEHAK. Residues 150-168 traverse the membrane as a helical segment; that stretch reads GVCIFVWILVFAQTLPLLI. The Extracellular segment spans residues 169–192; the sequence is NPMSKQEAERITCMEYPNFEETKS. Residues 193–215 traverse the membrane as a helical segment; that stretch reads LPWILLGACFIGYVLPLIIILIC. The Cytoplasmic segment spans residues 216-241; the sequence is YSQICCKLFRTAKQNPLTEKSGVNKK. Residues 242-265 form a helical membrane-spanning segment; the sequence is ALNTIILIIVVFVLCFTPYHVAII. Tyr260 is a 7alpha,25-dihydroxycholesterol binding site. Residues 266 to 287 lie on the Extracellular side of the membrane; the sequence is QHMIKKLRFSNFLECSQRHSFQ. The helical transmembrane segment at 288 to 312 threads the bilayer; the sequence is ISLHFTVCLMNFNCCMDPFIYFFAC. Residues 313-361 lie on the Cytoplasmic side of the membrane; sequence KGYKRKVMRMLKRQVSVSISSAVKSAPEENSREMTETQMMIHSKSSNGK. The residue at position 328 (Ser328) is a Phosphoserine. The segment at 340–361 is disordered; that stretch reads EENSREMTETQMMIHSKSSNGK. A compositionally biased stretch (polar residues) spans 348-361; the sequence is ETQMMIHSKSSNGK.

It belongs to the G-protein coupled receptor 1 family. As to quaternary structure, homodimer and heterodimer. Heterodimerizes with CXCR5; leading to modulate the interaction between of CXCL13 and CXCR5. Expressed abundantly in lymphoid tissues such as spleen and lymph node, and in B- and T-lymphocytes. Also highly expressed in lung, heart and gastrointestinal tract, and weakly expressed in the urogenital system and brain. Expressed in astrocytes.

The protein localises to the cell membrane. In terms of biological role, G-protein coupled receptor expressed in lymphocytes that acts as a chemotactic receptor for B-cells, T-cells, splenic dendritic cells, monocytes/macrophages and astrocytes. Receptor for oxysterol 7-alpha,25-dihydroxycholesterol (7-alpha,25-OHC) and other related oxysterols. Mediates cell positioning and movement of a number of cells by binding the 7-alpha,25-OHC ligand that forms a chemotactic gradient. Binding of 7-alpha,25-OHC mediates the correct localization of B-cells during humoral immune responses. Guides B-cell movement along the B-cell zone-T-cell zone boundary and later to interfollicular and outer follicular regions. Its specific expression during B-cell maturation helps position B-cells appropriately for mounting T-dependent antibody responses. Collaborates with CXCR5 to mediate B-cell migration; probably by forming a heterodimer with CXCR5 that affects the interaction between of CXCL13 and CXCR5. Also acts as a chemotactic receptor for some T-cells upon binding to 7-alpha,25-OHC ligand. Promotes follicular helper T (Tfh) cells differentiation by positioning activated T-cells at the follicle-T-zone interface, promoting contact of newly activated CD4 T-cells with activated dendritic cells and exposing them to Tfh-cell-promoting inducible costimulator (ICOS) ligand. Expression in splenic dendritic cells is required for their homeostasis, localization and ability to induce B- and T-cell responses: GPR183 acts as a chemotactic receptor in dendritic cells that mediates the accumulation of CD4(+) dendritic cells in bridging channels. Regulates migration of astrocytes and is involved in communication between astrocytes and macrophages. Promotes osteoclast precursor migration to bone surfaces. Signals constitutively through G(i)-alpha, but not G(s)-alpha or G(q)-alpha. Signals constitutively also via MAPK1/3 (ERK1/2). This chain is G-protein coupled receptor 183, found in Homo sapiens (Human).